The chain runs to 1917 residues: Diacylglycerol kinase eta (1917 aa).

Basic and acidic residues predominate over residues 1–10 (MSHLKLDTLH). The disordered stretch occupies residues 1–37 (MSHLKLDTLHVQRSPRGSRRSSRSSGRSSACSSGSIS). The segment covering 23–37 (RSSGRSSACSSGSIS) has biased composition (low complexity). A PH domain is found at 82-175 (AIIKEGFLLK…WLGSLKTATA (94 aa)). 2 consecutive Phorbol-ester/DAG-type zinc fingers follow at residues 195-245 (HHHW…IANC) and 268-319 (PHQW…AVAC). Residues 350 to 486 (GNFSPLLVFV…DRWSIMVFEK (137 aa)) form the DAGKc domain. Disordered stretches follow at residues 1015–1053 (TTLC…PPRI), 1114–1149 (LEQQ…SEDE), and 1380–1399 (KDKD…EETN). A compositionally biased stretch (polar residues) spans 1128-1145 (PEQQQTPTNKGPNSLATT). Residues 1854-1917 (WSVNEVVTWL…LQAIKDLSEN (64 aa)) form the SAM domain.

This sequence belongs to the eukaryotic diacylglycerol kinase family.

It localises to the cytoplasm. It catalyses the reaction a 1,2-diacyl-sn-glycerol + ATP = a 1,2-diacyl-sn-glycero-3-phosphate + ADP + H(+). In terms of biological role, phosphorylates diacylglycerol (DAG) to generate phosphatidic acid (PA). The chain is Diacylglycerol kinase eta from Drosophila yakuba (Fruit fly).